The following is an 895-amino-acid chain: Probable methyltransferase PMT27 (895 aa).

Topologically, residues 1 to 16 (MAFGRGRGNKRTSTSS) are cytoplasmic. The chain crosses the membrane as a helical; Signal-anchor for type II membrane protein span at residues 17 to 37 (YASTITMVIFVALCVFGVWML). The Lumenal portion of the chain corresponds to 38–895 (SSNSVIPPQI…KGFWRPETSQ (858 aa)). Over residues 43–52 (IPPQITQGST) the composition is skewed to polar residues. The interval 43-362 (IPPQITQGST…QRQTSESNTV (320 aa)) is disordered. Over residues 90–114 (NPGKLPDDAVKSEDEQRKSAKEKSE) the composition is skewed to basic and acidic residues. The span at 115-127 (TTSSKTQTQETQQ) shows a compositional bias: low complexity. The span at 129 to 143 (NDDKISEEKEKDNGK) shows a compositional bias: basic and acidic residues. N-linked (GlcNAc...) asparagine glycosylation occurs at Asn-145. The span at 154 to 174 (GQMKKVVKEFEKEQKQQRDED) shows a compositional bias: basic and acidic residues. Positions 176-191 (GTQPKGTQGQEQGQGK) are enriched in low complexity. Composition is skewed to polar residues over residues 199–232 (GNKQ…GETS) and 243–256 (PEEQ…TGQQ). The span at 257–320 (NEEKTTASEE…RKDEKKHEQG (64 aa)) shows a compositional bias: basic and acidic residues. Residues 337–346 (SQKSWKSQAT) are compositionally biased toward polar residues. N-linked (GlcNAc...) asparagine glycans are attached at residues Asn-375 and Asn-709.

The protein belongs to the methyltransferase superfamily.

It localises to the endoplasmic reticulum membrane. The sequence is that of Probable methyltransferase PMT27 from Arabidopsis thaliana (Mouse-ear cress).